A 258-amino-acid chain; its full sequence is Synapse differentiation-inducing gene protein 1 (258 aa).

The Cytoplasmic portion of the chain corresponds to 1–181; it reads MAGVVEQKSG…NFLVMPPRDH (181 aa). Position 137 is a phosphoserine (Ser137). The chain crosses the membrane as a helical span at residues 182–202; that stretch reads LGLSVFSMLCCFWPLGIAAFY. Residues 203–228 are Extracellular-facing; sequence LSHETNKAVAKGDFHQASTSSRRALF. An intramembrane region (helical) is located at residues 229 to 249; sequence LAVLSITIGTGIYVGVAVALI. At 250 to 258 the chain is on the extracellular side; sequence AYLSKSNHL.

The protein belongs to the CD225/Dispanin family. Homodimer. Interacts with GRIA1 and GRIA2.

It is found in the cell membrane. The protein localises to the early endosome membrane. The protein resides in the postsynaptic density membrane. It localises to the synapse. Its subcellular location is the cell projection. It is found in the dendrite. The protein localises to the dendritic spine. May regulate AMPA receptor content at nascent synapses, and have a role in postsynaptic development and maturation. The chain is Synapse differentiation-inducing gene protein 1 (SYNDIG1) from Bos taurus (Bovine).